A 305-amino-acid chain; its full sequence is MMKNLVVILGPTASGKTRLAVRLARDLKSEIVSADSRQVYRGMDIGTGKDLDEYRIDGEEIPCHLIDIVDPDYDFNVFEYQSRFYRCFEEILSRGIVPILVGGTGLYLSAVLENYRMVQVPENLDLRESLKAEPLERLQQILLEITPRIHNTTDLLDRGRLLRAIEIAQHSGRRGLRESPEHPRIEPLVFGVRWNRDLLRKRIALRLKERLSAGLIDEVKELHQSGISWDRLEFFGLEYRYVGLYLQSRMSYREMAEKLTIHICRFAKRQETWFRRMERHGIEIIWIEGDDYEALKEQLKGNLRS.

ATP is bound at residue 10–17; the sequence is GPTASGKT. Substrate is bound at residue 12–17; sequence TASGKT. The interval 35–38 is interaction with substrate tRNA; it reads DSRQ.

The protein belongs to the IPP transferase family. Monomer. Mg(2+) is required as a cofactor.

The enzyme catalyses adenosine(37) in tRNA + dimethylallyl diphosphate = N(6)-dimethylallyladenosine(37) in tRNA + diphosphate. In terms of biological role, catalyzes the transfer of a dimethylallyl group onto the adenine at position 37 in tRNAs that read codons beginning with uridine, leading to the formation of N6-(dimethylallyl)adenosine (i(6)A). The polypeptide is tRNA dimethylallyltransferase 1 (Syntrophus aciditrophicus (strain SB)).